Here is a 64-residue protein sequence, read N- to C-terminus: Large ribosomal subunit protein bL35 (64 aa).

This sequence belongs to the bacterial ribosomal protein bL35 family.

The chain is Large ribosomal subunit protein bL35 from Shewanella loihica (strain ATCC BAA-1088 / PV-4).